The chain runs to 765 residues: Beta-glucosidase cel3A (765 aa).

The signal sequence occupies residues 1–24; the sequence is MRWSSPTSSSLSLVALLLVAHVDA. Residues Asn-66, Asn-124, Asn-250, Asn-304, Asn-311, Asn-349, Asn-549, Asn-588, Asn-657, and Asn-681 are each glycosylated (N-linked (GlcNAc...) asparagine).

This sequence belongs to the glycosyl hydrolase 3 family.

It localises to the secreted. It carries out the reaction Hydrolysis of terminal, non-reducing beta-D-glucosyl residues with release of beta-D-glucose.. The protein operates within glycan metabolism; cellulose degradation. Functionally, beta-glucosidases are one of a number of cellulolytic enzymes involved in the degradation of cellulosic biomass. Catalyzes the last step releasing glucose from the inhibitory cellobiose. Shows higher activities on cellobiose and cellotriose but lower activities on laminarioligosaccharides and polymers. In Pyricularia oryzae (strain 70-15 / ATCC MYA-4617 / FGSC 8958) (Rice blast fungus), this protein is Beta-glucosidase cel3A.